The sequence spans 1909 residues: DENN domain-containing protein 4C (1909 aa).

The MABP domain occupies Lys-40–Val-199. The region spanning Val-191 to Pro-364 is the uDENN domain. In terms of domain architecture, cDENN spans Pro-385 to Lys-521. The dDENN domain maps to Leu-523–Gly-641. 3 positions are modified to phosphoserine: Ser-703, Ser-737, and Ser-741. One copy of the PPR repeat lies at Val-821–Ala-855. Glu-953, Ser-965, Ser-968, and Ser-973 each carry phosphoserine. Thr-975 is subject to Phosphothreonine. A phosphoserine mark is found at Ser-989, Ser-996, Ser-1003, Ser-1046, Ser-1061, Ser-1099, Ser-1126, Ser-1184, Ser-1225, Ser-1244, Ser-1252, and Ser-1278. Disordered regions lie at residues Lys-1243–Ser-1263 and Ser-1277–Leu-1338. A compositionally biased stretch (polar residues) spans Ser-1296–Ser-1316. 3 positions are modified to phosphoserine: Ser-1325, Ser-1337, and Ser-1346. A disordered region spans residues Ser-1419–Thr-1474. Over residues Leu-1426–Gly-1440 the composition is skewed to low complexity. The segment covering Lys-1459–His-1468 has biased composition (basic and acidic residues). Residues Ser-1623, Ser-1627, Ser-1629, Ser-1640, and Ser-1799 each carry the phosphoserine modification.

Post-translationally, phosphorylated in response to insulin.

The protein resides in the cytoplasmic vesicle membrane. It is found in the cell membrane. Its subcellular location is the cytoplasm. The protein localises to the cytosol. Guanine nucleotide exchange factor (GEF) activating RAB10. Promotes the exchange of GDP to GTP, converting inactive GDP-bound RAB10 into its active GTP-bound form. Thereby, stimulates SLC2A4/GLUT4 glucose transporter-enriched vesicles delivery to the plasma membrane in response to insulin. The sequence is that of DENN domain-containing protein 4C (DENND4C) from Homo sapiens (Human).